Consider the following 396-residue polypeptide: S-adenosylmethionine synthase (396 aa).

Histidine 16 provides a ligand contact to ATP. Mg(2+) is bound at residue aspartate 18. Residue glutamate 44 coordinates K(+). Residues glutamate 57 and glutamine 100 each coordinate L-methionine. Residues glutamine 100–arginine 110 are flexible loop. ATP contacts are provided by residues aspartate 165–lysine 167, lysine 231–phenylalanine 232, aspartate 240, arginine 246–lysine 247, alanine 263, and lysine 267. Aspartate 240 lines the L-methionine pocket. Residue lysine 271 coordinates L-methionine.

This sequence belongs to the AdoMet synthase family. As to quaternary structure, homotetramer; dimer of dimers. Mg(2+) serves as cofactor. K(+) is required as a cofactor.

It is found in the cytoplasm. The catalysed reaction is L-methionine + ATP + H2O = S-adenosyl-L-methionine + phosphate + diphosphate. It functions in the pathway amino-acid biosynthesis; S-adenosyl-L-methionine biosynthesis; S-adenosyl-L-methionine from L-methionine: step 1/1. Catalyzes the formation of S-adenosylmethionine (AdoMet) from methionine and ATP. The overall synthetic reaction is composed of two sequential steps, AdoMet formation and the subsequent tripolyphosphate hydrolysis which occurs prior to release of AdoMet from the enzyme. This chain is S-adenosylmethionine synthase, found in Marinobacter nauticus (strain ATCC 700491 / DSM 11845 / VT8) (Marinobacter aquaeolei).